Reading from the N-terminus, the 362-residue chain is Glutamine synthetase (362 aa).

Residues 26–107 (LIAEYIWIDS…VLSECWNADG (82 aa)) enclose the GS beta-grasp domain. The GS catalytic domain maps to 114–362 (HRHEAAKLME…METCFGAVSE (249 aa)).

This sequence belongs to the glutamine synthetase family. In terms of assembly, homooctamer.

The protein resides in the cytoplasm. The catalysed reaction is L-glutamate + NH4(+) + ATP = L-glutamine + ADP + phosphate + H(+). This Neurospora crassa (strain ATCC 24698 / 74-OR23-1A / CBS 708.71 / DSM 1257 / FGSC 987) protein is Glutamine synthetase (gln-1).